A 107-amino-acid polypeptide reads, in one-letter code: Nucleoid-associated protein GDI3467/Gdia_2910 (107 aa).

The protein belongs to the YbaB/EbfC family. Homodimer.

The protein localises to the cytoplasm. It is found in the nucleoid. Its function is as follows. Binds to DNA and alters its conformation. May be involved in regulation of gene expression, nucleoid organization and DNA protection. In Gluconacetobacter diazotrophicus (strain ATCC 49037 / DSM 5601 / CCUG 37298 / CIP 103539 / LMG 7603 / PAl5), this protein is Nucleoid-associated protein GDI3467/Gdia_2910.